A 181-amino-acid chain; its full sequence is Adenine phosphoribosyltransferase (181 aa).

This sequence belongs to the purine/pyrimidine phosphoribosyltransferase family. As to quaternary structure, homodimer.

Its subcellular location is the cytoplasm. The enzyme catalyses AMP + diphosphate = 5-phospho-alpha-D-ribose 1-diphosphate + adenine. It functions in the pathway purine metabolism; AMP biosynthesis via salvage pathway; AMP from adenine: step 1/1. Functionally, catalyzes a salvage reaction resulting in the formation of AMP, that is energically less costly than de novo synthesis. The polypeptide is Adenine phosphoribosyltransferase (Aliivibrio fischeri (strain ATCC 700601 / ES114) (Vibrio fischeri)).